The primary structure comprises 138 residues: Nucleoside diphosphate kinase (138 aa).

Residues Lys-9, Phe-57, Arg-85, Thr-91, Arg-102, and Asn-112 each contribute to the ATP site. His-115 serves as the catalytic Pros-phosphohistidine intermediate.

It belongs to the NDK family. Homotetramer. The cofactor is Mg(2+).

The protein localises to the cytoplasm. It catalyses the reaction a 2'-deoxyribonucleoside 5'-diphosphate + ATP = a 2'-deoxyribonucleoside 5'-triphosphate + ADP. The enzyme catalyses a ribonucleoside 5'-diphosphate + ATP = a ribonucleoside 5'-triphosphate + ADP. In terms of biological role, major role in the synthesis of nucleoside triphosphates other than ATP. The ATP gamma phosphate is transferred to the NDP beta phosphate via a ping-pong mechanism, using a phosphorylated active-site intermediate. The protein is Nucleoside diphosphate kinase of Exiguobacterium sibiricum (strain DSM 17290 / CCUG 55495 / CIP 109462 / JCM 13490 / 255-15).